Here is a 158-residue protein sequence, read N- to C-terminus: MQGRLSAWLVKHGLVHRSLGFDYQGIETLQIKPEDWHSIAVILYVYGYNYLRSQCAYDVSPGGLLASVYHLTRIECGIYQPEEVCIKIFVPRNNPRIPSIFWVWKSADFQERESYDMLGISYDNHPRLKRILMPESWIGWPLRKDYITPNFYEIQDAH.

It belongs to the complex I 30 kDa subunit family. NDH is composed of at least 16 different subunits, 5 of which are encoded in the nucleus.

It is found in the plastid. It localises to the chloroplast thylakoid membrane. The catalysed reaction is a plastoquinone + NADH + (n+1) H(+)(in) = a plastoquinol + NAD(+) + n H(+)(out). It catalyses the reaction a plastoquinone + NADPH + (n+1) H(+)(in) = a plastoquinol + NADP(+) + n H(+)(out). In terms of biological role, NDH shuttles electrons from NAD(P)H:plastoquinone, via FMN and iron-sulfur (Fe-S) centers, to quinones in the photosynthetic chain and possibly in a chloroplast respiratory chain. The immediate electron acceptor for the enzyme in this species is believed to be plastoquinone. Couples the redox reaction to proton translocation, and thus conserves the redox energy in a proton gradient. The sequence is that of NAD(P)H-quinone oxidoreductase subunit J, chloroplastic from Lotus japonicus (Lotus corniculatus var. japonicus).